The following is a 190-amino-acid chain: Bifunctional D-Ala-D-Ala dipeptidase and D-Ala-D-Ala carboxypeptidase VanXYC (190 aa).

A Mg(2+)-binding site is contributed by E66. 5 residues coordinate a dipeptide: Q67, A88, S93, H95, and D102. Positions 95 and 102 each coordinate Cu(2+). Residues H95 and D102 each contribute to the Zn(2+) site. E153 acts as the catalytic acid/base residue in catalysis. A dipeptide-binding residues include W155 and H156. Position 156 (H156) interacts with Cu(2+). H156 lines the Zn(2+) pocket.

This sequence belongs to the peptidase M15D family. As to quaternary structure, homodimer.

It is found in the cytoplasm. The enzyme catalyses D-alanyl-D-alanine + H2O = 2 D-alanine. The catalysed reaction is UDP-N-acetyl-alpha-D-muramoyl-L-alanyl-gamma-D-glutamyl-L-lysyl-D-alanyl-D-alanine + H2O = UDP-N-acetyl-alpha-D-muramoyl-L-alanyl-gamma-D-glutamyl-L-lysyl-D-alanine + D-alanine. Bifunctional enzyme, exhibiting dipeptidase and carboxypeptidase activities. Catalyzes hydrolysis of the D-alanyl-D-alanine dipeptide. Cleaves the C-terminal D-alanine residue of UDP-muramyl-pentapeptide[Ala] (UDP-MurNAc-L-Ala-D-Glu-L-Lys-D-Ala-D-Ala). Shows no activity against the pentapeptide with a C-terminal D-serine residue. Together with VanC/VanC1 and VanT, required for vancomycin resistance in E.gallinarum strain BM4174. The polypeptide is Bifunctional D-Ala-D-Ala dipeptidase and D-Ala-D-Ala carboxypeptidase VanXYC (Enterococcus gallinarum).